The primary structure comprises 634 residues: Threonine--tRNA ligase (634 aa).

Residues 1–61 (MINIRFPDGS…NSNCELRLIT (61 aa)) form the TGS domain. The tract at residues 241 to 532 (DHRKIGKVLD…LIEHYAGNLP (292 aa)) is catalytic. Residues Cys-332, His-383, and His-509 each contribute to the Zn(2+) site.

It belongs to the class-II aminoacyl-tRNA synthetase family. In terms of assembly, homodimer. It depends on Zn(2+) as a cofactor.

Its subcellular location is the cytoplasm. It catalyses the reaction tRNA(Thr) + L-threonine + ATP = L-threonyl-tRNA(Thr) + AMP + diphosphate + H(+). Catalyzes the attachment of threonine to tRNA(Thr) in a two-step reaction: L-threonine is first activated by ATP to form Thr-AMP and then transferred to the acceptor end of tRNA(Thr). Also edits incorrectly charged L-seryl-tRNA(Thr). The protein is Threonine--tRNA ligase of Francisella tularensis subsp. mediasiatica (strain FSC147).